We begin with the raw amino-acid sequence, 327 residues long: GTP 3',8-cyclase (327 aa).

The region spanning A8–A232 is the Radical SAM core domain. Residue R17 participates in GTP binding. C24 and C28 together coordinate [4Fe-4S] cluster. Y30 provides a ligand contact to S-adenosyl-L-methionine. Position 31 (C31) interacts with [4Fe-4S] cluster. R66 is a GTP binding site. G70 provides a ligand contact to S-adenosyl-L-methionine. GTP is bound at residue T97. S121 contributes to the S-adenosyl-L-methionine binding site. Residue K158 participates in GTP binding. M192 is a binding site for S-adenosyl-L-methionine. [4Fe-4S] cluster contacts are provided by C255 and C258. R260–R262 lines the GTP pocket. C272 provides a ligand contact to [4Fe-4S] cluster.

It belongs to the radical SAM superfamily. MoaA family. Monomer and homodimer. Requires [4Fe-4S] cluster as cofactor.

The enzyme catalyses GTP + AH2 + S-adenosyl-L-methionine = (8S)-3',8-cyclo-7,8-dihydroguanosine 5'-triphosphate + 5'-deoxyadenosine + L-methionine + A + H(+). The protein operates within cofactor biosynthesis; molybdopterin biosynthesis. Functionally, catalyzes the cyclization of GTP to (8S)-3',8-cyclo-7,8-dihydroguanosine 5'-triphosphate. The polypeptide is GTP 3',8-cyclase (Photorhabdus laumondii subsp. laumondii (strain DSM 15139 / CIP 105565 / TT01) (Photorhabdus luminescens subsp. laumondii)).